An 81-amino-acid polypeptide reads, in one-letter code: Putative membrane protein insertion efficiency factor (81 aa).

The protein belongs to the UPF0161 family.

It localises to the cell inner membrane. Its function is as follows. Could be involved in insertion of integral membrane proteins into the membrane. The polypeptide is Putative membrane protein insertion efficiency factor (Legionella pneumophila subsp. pneumophila (strain Philadelphia 1 / ATCC 33152 / DSM 7513)).